Consider the following 297-residue polypeptide: Homoserine kinase (297 aa).

ATP is bound at residue 82-92 (PVSRGLGSSAA).

Belongs to the GHMP kinase family. Homoserine kinase subfamily.

Its subcellular location is the cytoplasm. It catalyses the reaction L-homoserine + ATP = O-phospho-L-homoserine + ADP + H(+). It participates in amino-acid biosynthesis; L-threonine biosynthesis; L-threonine from L-aspartate: step 4/5. Functionally, catalyzes the ATP-dependent phosphorylation of L-homoserine to L-homoserine phosphate. The polypeptide is Homoserine kinase (Clostridium botulinum (strain 657 / Type Ba4)).